Reading from the N-terminus, the 344-residue chain is Dihydroorotase (344 aa).

The Zn(2+) site is built by His-14 and His-16. Substrate-binding positions include 16–18 and Asn-42; that span reads HLR. Zn(2+) contacts are provided by Lys-100, His-137, and His-175. At Lys-100 the chain carries N6-carboxylysine. His-137 provides a ligand contact to substrate. Leu-220 lines the substrate pocket. Asp-248 is a Zn(2+) binding site. Asp-248 is a catalytic residue. 2 residues coordinate substrate: His-252 and Ala-264.

It belongs to the metallo-dependent hydrolases superfamily. DHOase family. Class II DHOase subfamily. Homodimer. The cofactor is Zn(2+).

The enzyme catalyses (S)-dihydroorotate + H2O = N-carbamoyl-L-aspartate + H(+). Its pathway is pyrimidine metabolism; UMP biosynthesis via de novo pathway; (S)-dihydroorotate from bicarbonate: step 3/3. Catalyzes the reversible cyclization of carbamoyl aspartate to dihydroorotate. The protein is Dihydroorotase of Ralstonia pickettii (strain 12J).